The primary structure comprises 464 residues: Ribulose bisphosphate carboxylase/oxygenase activase A, chloroplastic (464 aa).

A chloroplast-targeting transit peptide spans 1-48 (MAAAFSSTVGAPASTPTNFLGKKLKKQVTSAVNYHGKSSKANRFTVMA). 155 to 162 (GGKGQGKS) provides a ligand contact to ATP.

The protein belongs to the RuBisCO activase family.

It localises to the plastid. Its subcellular location is the chloroplast stroma. Functionally, activation of RuBisCO (ribulose-1,5-bisphosphate carboxylase/oxygenase; EC 4.1.1.39) involves the ATP-dependent carboxylation of the epsilon-amino group of lysine leading to a carbamate structure. This is Ribulose bisphosphate carboxylase/oxygenase activase A, chloroplastic (RCAA) from Hordeum vulgare (Barley).